We begin with the raw amino-acid sequence, 133 residues long: Ribosomal silencing factor RsfS (133 aa).

The protein belongs to the Iojap/RsfS family. In terms of assembly, interacts with ribosomal protein uL14 (rplN).

It is found in the cytoplasm. Functionally, functions as a ribosomal silencing factor. Interacts with ribosomal protein uL14 (rplN), blocking formation of intersubunit bridge B8. Prevents association of the 30S and 50S ribosomal subunits and the formation of functional ribosomes, thus repressing translation. The chain is Ribosomal silencing factor RsfS from Zymomonas mobilis subsp. mobilis (strain ATCC 31821 / ZM4 / CP4).